The sequence spans 548 residues: Chaperonin GroEL (548 aa).

ATP contacts are provided by residues 30 to 33, Lys-51, 87 to 91, Gly-415, 479 to 481, and Asp-495; these read TLGP, DGTTT, and NAA.

Belongs to the chaperonin (HSP60) family. Forms a cylinder of 14 subunits composed of two heptameric rings stacked back-to-back. Interacts with the co-chaperonin GroES.

Its subcellular location is the cytoplasm. The catalysed reaction is ATP + H2O + a folded polypeptide = ADP + phosphate + an unfolded polypeptide.. Together with its co-chaperonin GroES, plays an essential role in assisting protein folding. The GroEL-GroES system forms a nano-cage that allows encapsulation of the non-native substrate proteins and provides a physical environment optimized to promote and accelerate protein folding. The polypeptide is Chaperonin GroEL (Proteus mirabilis (strain HI4320)).